A 276-amino-acid polypeptide reads, in one-letter code: Orotidine 5'-phosphate decarboxylase (276 aa).

Lys-95 acts as the Proton donor in catalysis.

It belongs to the OMP decarboxylase family. Type 2 subfamily.

It carries out the reaction orotidine 5'-phosphate + H(+) = UMP + CO2. The protein operates within pyrimidine metabolism; UMP biosynthesis via de novo pathway; UMP from orotate: step 2/2. The sequence is that of Orotidine 5'-phosphate decarboxylase (pyrF) from Mycolicibacterium smegmatis (strain ATCC 700084 / mc(2)155) (Mycobacterium smegmatis).